A 263-amino-acid polypeptide reads, in one-letter code: MDGKVQVLDFIKINPAGNITILIDNFDIYDKNIPKLSEEIMKETNLYAEQVGFIKEKHLQMMGGEFCGNASRSFASLLAFRDKDFSEQKNYSITCSGESEVLDVDVRTDGAKNKFLAKIKMPKFISLEEISIDEYKLGLVRFSGISHFIFNIKENKETSFENIIDLVKKYLSNEDYSAFGIMFFDKDNLSMKPYVYVKELESGIYENSCASGTTALGYYLKKYKNLDRAKVVQPNGWLEYIIENDEMYIDGPVEIVAEGKVYI.

Cys67 acts as the Proton acceptor in catalysis. Cys209 functions as the Proton donor in the catalytic mechanism.

This sequence belongs to the histidine racemase family. Homodimer.

It catalyses the reaction L-histidine = D-histidine. Its function is as follows. Cofactor-independent isomerase that catalyzes the reversible conversion of L-histidine to D-histidine. May play a role in growth of F.nucleatum. This Fusobacterium nucleatum subsp. nucleatum (strain ATCC 23726 / VPI 4351) protein is Histidine racemase.